The following is a 435-amino-acid chain: Serine--tRNA ligase (435 aa).

Position 237 to 239 (237 to 239 (TAE)) interacts with L-serine. 268–270 (RSE) contacts ATP. Residue E291 participates in L-serine binding. Position 355–358 (355–358 (EISS)) interacts with ATP. S390 contributes to the L-serine binding site.

The protein belongs to the class-II aminoacyl-tRNA synthetase family. Type-1 seryl-tRNA synthetase subfamily. As to quaternary structure, homodimer. The tRNA molecule binds across the dimer.

The protein resides in the cytoplasm. It catalyses the reaction tRNA(Ser) + L-serine + ATP = L-seryl-tRNA(Ser) + AMP + diphosphate + H(+). The catalysed reaction is tRNA(Sec) + L-serine + ATP = L-seryl-tRNA(Sec) + AMP + diphosphate + H(+). It functions in the pathway aminoacyl-tRNA biosynthesis; selenocysteinyl-tRNA(Sec) biosynthesis; L-seryl-tRNA(Sec) from L-serine and tRNA(Sec): step 1/1. Its function is as follows. Catalyzes the attachment of serine to tRNA(Ser). Is also able to aminoacylate tRNA(Sec) with serine, to form the misacylated tRNA L-seryl-tRNA(Sec), which will be further converted into selenocysteinyl-tRNA(Sec). The polypeptide is Serine--tRNA ligase (Lactobacillus delbrueckii subsp. bulgaricus (strain ATCC BAA-365 / Lb-18)).